Consider the following 382-residue polypeptide: Guanine nucleotide-binding protein G(s) subunit alpha (382 aa).

Residues 1–14 (MGCFGSPTSKQSDV) show a composition bias toward polar residues. The disordered stretch occupies residues 1 to 31 (MGCFGSPTSKQSDVNSEDSKSQKRRSDAISR). The N-palmitoyl glycine moiety is linked to residue Gly-2. Cys-3 is lipidated: S-palmitoyl cysteine. Residues 17 to 31 (EDSKSQKRRSDAISR) are compositionally biased toward basic and acidic residues. The 341-residue stretch at 42-382 (ATHRLLLLGA…RMHLRQYELL (341 aa)) folds into the G-alpha domain. A G1 motif region spans residues 45–58 (RLLLLGAGESGKST). Residues 50–57 (GAGESGKS), 51–58 (AGESGKST), 186–192 (LRCRVLT), 211–215 (DVGGQ), 212–216 (VGGQR), 280–283 (NKQD), 281–284 (KQDL), and Ala-354 contribute to the GTP site. Mg(2+) is bound by residues Ser-57 and Thr-192. The tract at residues 184–192 (DILRCRVLT) is G2 motif. The interval 207–216 (FHMFDVGGQR) is G3 motif. The tract at residues 276–283 (ILFLNKQD) is G4 motif. Residues 352-357 (TCAVDT) form a G5 motif region.

The protein belongs to the G-alpha family. G(s) subfamily. In terms of assembly, g proteins are composed of 3 units; alpha, beta and gamma. The alpha chain contains the guanine nucleotide binding site.

In terms of biological role, guanine nucleotide-binding proteins (G proteins) are involved as modulators or transducers in various transmembrane signaling systems. The G(s) protein is involved in hormonal regulation of adenylate cyclase: it activates the cyclase. The sequence is that of Guanine nucleotide-binding protein G(s) subunit alpha (G-salpha60A) from Drosophila pseudoobscura pseudoobscura (Fruit fly).